The sequence spans 447 residues: Serine--tRNA ligase (447 aa).

Residue 245–247 (TAE) participates in L-serine binding. ATP-binding positions include 276 to 278 (RKE) and V292. Position 299 (E299) interacts with L-serine. 363 to 366 (ELAS) provides a ligand contact to ATP. T398 provides a ligand contact to L-serine.

The protein belongs to the class-II aminoacyl-tRNA synthetase family. Type-1 seryl-tRNA synthetase subfamily. In terms of assembly, homodimer. The tRNA molecule binds across the dimer.

It localises to the cytoplasm. It catalyses the reaction tRNA(Ser) + L-serine + ATP = L-seryl-tRNA(Ser) + AMP + diphosphate + H(+). The catalysed reaction is tRNA(Sec) + L-serine + ATP = L-seryl-tRNA(Sec) + AMP + diphosphate + H(+). Its pathway is aminoacyl-tRNA biosynthesis; selenocysteinyl-tRNA(Sec) biosynthesis; L-seryl-tRNA(Sec) from L-serine and tRNA(Sec): step 1/1. In terms of biological role, catalyzes the attachment of serine to tRNA(Ser). Is also able to aminoacylate tRNA(Sec) with serine, to form the misacylated tRNA L-seryl-tRNA(Sec), which will be further converted into selenocysteinyl-tRNA(Sec). The sequence is that of Serine--tRNA ligase from Pyrobaculum neutrophilum (strain DSM 2338 / JCM 9278 / NBRC 100436 / V24Sta) (Thermoproteus neutrophilus).